Consider the following 301-residue polypeptide: Phosphoribosylaminoimidazole-succinocarboxamide synthase (301 aa).

The protein belongs to the SAICAR synthetase family.

The catalysed reaction is 5-amino-1-(5-phospho-D-ribosyl)imidazole-4-carboxylate + L-aspartate + ATP = (2S)-2-[5-amino-1-(5-phospho-beta-D-ribosyl)imidazole-4-carboxamido]succinate + ADP + phosphate + 2 H(+). It functions in the pathway purine metabolism; IMP biosynthesis via de novo pathway; 5-amino-1-(5-phospho-D-ribosyl)imidazole-4-carboxamide from 5-amino-1-(5-phospho-D-ribosyl)imidazole-4-carboxylate: step 1/2. In Mycolicibacterium vanbaalenii (strain DSM 7251 / JCM 13017 / BCRC 16820 / KCTC 9966 / NRRL B-24157 / PYR-1) (Mycobacterium vanbaalenii), this protein is Phosphoribosylaminoimidazole-succinocarboxamide synthase.